A 132-amino-acid chain; its full sequence is MISITEWQKIGVGTTGFGIFFILFGMLLYFDSVLLAFGNLLFLTGLSLIIGLRRTFSFFFQRHKFKGTSFFLGGVVIVLLRWPLLGMCLETYGFFSLFRGFFPVAFGFLGSASNIPFLSALFQRLQGTSSMV.

At 1 to 16 (MISITEWQKIGVGTTG) the chain is on the cytoplasmic side. Residues 17-37 (FGIFFILFGMLLYFDSVLLAF) traverse the membrane as a helical segment. The Lumenal segment spans residues 38 to 39 (GN). Residues 40-60 (LLFLTGLSLIIGLRRTFSFFF) traverse the membrane as a helical segment. Residues 61–68 (QRHKFKGT) are Cytoplasmic-facing. A helical transmembrane segment spans residues 69-89 (SFFLGGVVIVLLRWPLLGMCL). Residues 90–100 (ETYGFFSLFRG) lie on the Lumenal side of the membrane. The helical transmembrane segment at 101–121 (FFPVAFGFLGSASNIPFLSAL) threads the bilayer. The Cytoplasmic portion of the chain corresponds to 122 to 132 (FQRLQGTSSMV).

This sequence belongs to the GOT1 family.

It localises to the golgi apparatus membrane. Functionally, may be involved in fusion of ER-derived transport vesicles with the Golgi complex. The polypeptide is Vesicle transport protein GOT1A (Bos taurus (Bovine)).